The primary structure comprises 55 residues: ATP synthase F(0) complex subunit 8 (55 aa).

The chain crosses the membrane as a helical span at residues 8–24 (PWFMIMLMTWFTYSLLI).

It belongs to the ATPase protein 8 family. Component of the ATP synthase complex composed at least of ATP5F1A/subunit alpha, ATP5F1B/subunit beta, ATP5MC1/subunit c (homooctomer), MT-ATP6/subunit a, MT-ATP8/subunit 8, ATP5ME/subunit e, ATP5MF/subunit f, ATP5MG/subunit g, ATP5MK/subunit k, ATP5MJ/subunit j, ATP5F1C/subunit gamma, ATP5F1D/subunit delta, ATP5F1E/subunit epsilon, ATP5PF/subunit F6, ATP5PB/subunit b, ATP5PD/subunit d, ATP5PO/subunit OSCP. ATP synthase complex consists of a soluble F(1) head domain (subunits alpha(3) and beta(3)) - the catalytic core - and a membrane F(0) domain - the membrane proton channel (subunits c, a, 8, e, f, g, k and j). These two domains are linked by a central stalk (subunits gamma, delta, and epsilon) rotating inside the F1 region and a stationary peripheral stalk (subunits F6, b, d, and OSCP).

The protein localises to the mitochondrion membrane. Its function is as follows. Subunit 8, of the mitochondrial membrane ATP synthase complex (F(1)F(0) ATP synthase or Complex V) that produces ATP from ADP in the presence of a proton gradient across the membrane which is generated by electron transport complexes of the respiratory chain. ATP synthase complex consist of a soluble F(1) head domain - the catalytic core - and a membrane F(1) domain - the membrane proton channel. These two domains are linked by a central stalk rotating inside the F(1) region and a stationary peripheral stalk. During catalysis, ATP synthesis in the catalytic domain of F(1) is coupled via a rotary mechanism of the central stalk subunits to proton translocation. In vivo, can only synthesize ATP although its ATP hydrolase activity can be activated artificially in vitro. Part of the complex F(0) domain. The chain is ATP synthase F(0) complex subunit 8 from Coturnix japonica (Japanese quail).